The chain runs to 140 residues: UPF0251 protein Athe_2281 (140 aa).

It belongs to the UPF0251 family.

The chain is UPF0251 protein Athe_2281 from Caldicellulosiruptor bescii (strain ATCC BAA-1888 / DSM 6725 / KCTC 15123 / Z-1320) (Anaerocellum thermophilum).